We begin with the raw amino-acid sequence, 370 residues long: Peptidyl-prolyl cis-trans isomerase D (370 aa).

Ser-5 carries the post-translational modification Phosphoserine. Residues 19-183 (FFDVDIGGER…KLCVIAECGE (165 aa)) form the PPIase cyclophilin-type domain. The residue at position 171 (Lys-171) is an N6-acetyllysine. The chaperone activity stretch occupies residues 185 to 215 (KEGDEWGIFPKDGSGDSHPDFPEDADIDLKD). Residue Ser-198 is modified to Phosphoserine. The interaction with HSP90AB1 stretch occupies residues 214 to 370 (KDVDKILLIS…EKAVYAKMFA (157 aa)). TPR repeat units follow at residues 223–256 (SEDL…LDSS), 273–306 (LSCV…DPSN), and 308–340 (KALY…APGD).

This sequence belongs to the cyclophilin-type PPIase family. PPIase D subfamily. As to quaternary structure, identified in ESR1 or NR3C1/GCR steroid receptor-chaperone complexes. Found in HSP90 chaperone complexes with kinase clients LCK or EIF2AK1. Two monomers associate with one HSP90 homodimer. Interacts with HSP90AA1. Interacts with HSP90AB1; PPID and FKBP4 compete for binding to HSP90AB1 and the interaction is mutually exclusive with the PPID:HSPA8 interaction. Interacts with HSPA8; PPID and STIP1 but not FKBP4 compete for binding to HSPA8 and the interaction is mutually exclusive with the PPID:HSP90AB1 interaction. Interacts with S100A1 and S100A2; the interactions dissociate the PPID:HSP90AA1 interaction. Interacts with S100A6. Interacts with MYB, ILF2, XRCC6, RACK1 and RPS3. Interacts with cytoplasmic dynein 1 intermediate chain (DYNC1I1 or DYNC1I2).

It is found in the cytoplasm. The protein resides in the nucleus. Its subcellular location is the nucleolus. It localises to the nucleoplasm. The catalysed reaction is [protein]-peptidylproline (omega=180) = [protein]-peptidylproline (omega=0). Less sensitive to inhibition by cyclosporin A than is CYP-18. In terms of biological role, PPIase that catalyzes the cis-trans isomerization of proline imidic peptide bonds in oligopeptides and may therefore assist protein folding. Proposed to act as a co-chaperone in HSP90 complexes such as in unligated steroid receptors heterocomplexes. Different co-chaperones seem to compete for association with HSP90 thus establishing distinct HSP90-co-chaperone-receptor complexes with the potential to exert tissue-specific receptor activity control. May have a preference for estrogen receptor complexes and is not found in glucocorticoid receptor complexes. May be involved in cytoplasmic dynein-dependent movement of the receptor from the cytoplasm to the nucleus. May regulate MYB by inhibiting its DNA-binding activity. Involved in regulation of AHR signaling by promoting the formation of the AHR:ARNT dimer; the function is independent of HSP90 but requires the chaperone activity region. Involved in regulation of UV radiation-induced apoptosis. This chain is Peptidyl-prolyl cis-trans isomerase D, found in Rattus norvegicus (Rat).